Consider the following 360-residue polypeptide: Type 2 DNA topoisomerase 6 subunit A (360 aa).

In terms of domain architecture, Topo IIA-type catalytic spans 3-140 (EIERRCLRAL…FHIRPEEDGA (138 aa)). The O-(5'-phospho-DNA)-tyrosine intermediate role is filled by Tyr-97. Mg(2+) contacts are provided by Glu-193 and Asp-245.

This sequence belongs to the TOP6A family. Homodimer. Heterotetramer of two Top6A and two Top6B chains. It depends on Mg(2+) as a cofactor.

It catalyses the reaction ATP-dependent breakage, passage and rejoining of double-stranded DNA.. Its function is as follows. Relaxes both positive and negative superturns and exhibits a strong decatenase activity. In Archaeoglobus fulgidus (strain ATCC 49558 / DSM 4304 / JCM 9628 / NBRC 100126 / VC-16), this protein is Type 2 DNA topoisomerase 6 subunit A.